The following is a 417-amino-acid chain: Phosphoglycerate kinase 2 (417 aa).

An N-acetylserine modification is found at S2. Residues S2 and S4 each carry the phosphoserine modification. An N6-acetyllysine modification is found at K11. (2R)-3-phosphoglycerate contacts are provided by V23, D24, F25, N26, Q38, R39, S62, H63, G65, and R66. N6-acetyllysine occurs at positions 75, 86, and 97. (2R)-3-phosphoglycerate is bound by residues L122 and R123. 2 positions are modified to N6-acetyllysine: K131 and K146. Residues H170 and R171 each contribute to the (2R)-3-phosphoglycerate site. A Phosphotyrosine modification is found at Y196. K199 bears the N6-acetyllysine mark. Position 214 (G214) interacts with ADP. Position 214 (G214) interacts with CDP. The AMP site is built by A215 and K216. A215 is a binding site for ATP. A215 contributes to the Mg(2+) binding site. Mg(2+) is bound by residues A218 and D219. D219 contacts CDP. Residue K220 participates in AMP binding. K220 lines the ATP pocket. ADP is bound at residue G238. G238 lines the CDP pocket. An AMP-binding site is contributed by G239. G239 serves as a coordination point for ATP. 2 positions are modified to N6-acetyllysine: K267 and K291. AMP is bound at residue A313. ATP is bound at residue A313. The CDP site is built by G338 and F343. F343 contacts ADP. E344 serves as a coordination point for AMP. ATP-binding residues include E344, D375, and T376. D375 contributes to the Mg(2+) binding site.

This sequence belongs to the phosphoglycerate kinase family. As to quaternary structure, monomer. Mg(2+) is required as a cofactor. In terms of tissue distribution, testis specific.

Its subcellular location is the cytoplasm. The enzyme catalyses (2R)-3-phosphoglycerate + ATP = (2R)-3-phospho-glyceroyl phosphate + ADP. It participates in carbohydrate degradation; glycolysis; pyruvate from D-glyceraldehyde 3-phosphate: step 2/5. Its function is as follows. Essential for sperm motility and male fertility but is not required for the completion of spermatogenesis. The chain is Phosphoglycerate kinase 2 from Sus scrofa (Pig).